The following is a 283-amino-acid chain: Bifunctional protein FolD (283 aa).

Residues 163-165 (GRS), Ser188, and Ile229 contribute to the NADP(+) site.

The protein belongs to the tetrahydrofolate dehydrogenase/cyclohydrolase family. In terms of assembly, homodimer.

It carries out the reaction (6R)-5,10-methylene-5,6,7,8-tetrahydrofolate + NADP(+) = (6R)-5,10-methenyltetrahydrofolate + NADPH. It catalyses the reaction (6R)-5,10-methenyltetrahydrofolate + H2O = (6R)-10-formyltetrahydrofolate + H(+). It functions in the pathway one-carbon metabolism; tetrahydrofolate interconversion. In terms of biological role, catalyzes the oxidation of 5,10-methylenetetrahydrofolate to 5,10-methenyltetrahydrofolate and then the hydrolysis of 5,10-methenyltetrahydrofolate to 10-formyltetrahydrofolate. The protein is Bifunctional protein FolD of Campylobacter fetus subsp. fetus (strain 82-40).